The following is a 465-amino-acid chain: MENRCLPKKVPGFCSFRYGLAILLHFCNIVIMAQRVCLNLTMVAMVNKTEPPHLSNKSVAEMLDNVKNPVHSWSLDIQGLVLSSVFLGMVVIQVPVGYLSGAYPMEKIIGSSLFLSSVLSLLIPPAAQVGAALVIVCRVLQGIAQGAVSTGQHGIWVKWAPPLERGRLTSMTLSGFVMGPFIALLVSGFICDLLGWPMVFYIFGIVGCVLSLFWFILLFDDPNNHPYMSSSEKDYITSSLMQQVHSGRQSLPIKAMLKSLPLWAIILNSFAFIWSNNLLVTYTPTFISTTLHVNVRENGLLSSLPYLLAYICGIVAGQMSDFLLSRKIFSVVAVRKLFTTLGIFCPVIFVVCLLYLSYNFYSTVIFLTLANSTLSFSFCGQLINALDIAPRYYGFLKAVTALIGIFGGLISSTLAGLILNQDPEYAWHKNFFLMAGINVTCLAFYLLFAKGDIQDWAKETKTTRL.

3 N-linked (GlcNAc...) asparagine glycosylation sites follow: Asn-39, Asn-47, and Asn-56. 10 helical membrane-spanning segments follow: residues 79–99, 117–137, 176–196, 199–219, 260–280, 299–319, 337–357, 363–383, 399–419, and 431–451; these read GLVL…VGYL, SVLS…VIVC, FVMG…LLGW, VFYI…ILLF, LPLW…NLLV, GLLS…AGQM, LFTT…LYLS, TVIF…GQLI, VTAL…GLIL, and FFLM…FAKG.

This sequence belongs to the major facilitator superfamily. Sodium/anion cotransporter family. In terms of assembly, interacts with PDZK1.

It is found in the apical cell membrane. It carries out the reaction 3 Na(+)(out) + phosphate(out) = 3 Na(+)(in) + phosphate(in). It catalyses the reaction urate(out) = urate(in). In terms of biological role, important for the resorption of phosphate by the kidney. May be involved in actively transporting phosphate into cells via Na(+) cotransport in the renal brush border membrane. Plays a role in urate transport in the kidney. This Rattus norvegicus (Rat) protein is Sodium-dependent phosphate transport protein 1 (Slc17a1).